Consider the following 692-residue polypeptide: Ribosome-releasing factor 2, mitochondrial (692 aa).

The N-terminal 29 residues, 1–29, are a transit peptide targeting the mitochondrion; the sequence is MLKYAWQSGPKQRNRWLWHLSNQIWKRSY. Residues 31–310 enclose the tr-type G domain; the sequence is SKIRNIGILA…AVNAYLPAPE (280 aa). Residues 40–47, 104–108, and 158–161 contribute to the GTP site; these read AHIDAGKT, DTPGH, and NKMD.

This sequence belongs to the TRAFAC class translation factor GTPase superfamily. Classic translation factor GTPase family. EF-G/EF-2 subfamily.

The protein localises to the mitochondrion. Its function is as follows. Mitochondrial GTPase that mediates the disassembly of ribosomes from messenger RNA at the termination of mitochondrial protein biosynthesis. Not involved in the GTP-dependent ribosomal translocation step during translation elongation. This is Ribosome-releasing factor 2, mitochondrial from Drosophila sechellia (Fruit fly).